Here is a 335-residue protein sequence, read N- to C-terminus: MKRIAVDAMGGDHAPQAVVEGVNQALAAFPDIEIQLYGDEAKIKQYLTATERVSIVHTTEKINSDDEPVKAIRRKKEASMVLATKAVKDGQADAVLSAGNTGALLAAGVFVVGRIKNIDRPGLMSTLPTMDGKGFDMMDLGANAENIAHHLYQYGILGSFYAEHVRGVKQPRVGLLNNGTEDTKGTPVHQEAYKLLAEDKSINFIGNVEARELLNSVADVVVTDGFTGNAVLKTIEGTAKSIVGQLTGSIKNGGLRAKLGGLLVKPTLKKALGAMDYKTAGGAVLLGLKAPVIKAHGSSDAQSIFYTIKQTRSILEAGIVEKSVAKFSVVEESHD.

The protein belongs to the PlsX family. In terms of assembly, homodimer. Probably interacts with PlsY.

The protein resides in the cytoplasm. It carries out the reaction a fatty acyl-[ACP] + phosphate = an acyl phosphate + holo-[ACP]. The protein operates within lipid metabolism; phospholipid metabolism. In terms of biological role, catalyzes the reversible formation of acyl-phosphate (acyl-PO(4)) from acyl-[acyl-carrier-protein] (acyl-ACP). This enzyme utilizes acyl-ACP as fatty acyl donor, but not acyl-CoA. This Streptococcus suis (strain 98HAH33) protein is Phosphate acyltransferase.